The chain runs to 917 residues: MIAAQLLAYYFTELKDDQVKKIDKYLYAMRLSDETLIDIMTRFRKEMKNGLSRDFNPTATVKMLPTFVRSIPDGSEKGDFIALDLGGSSFRILRVQVNHEKNQNVHMESEVYDTPENIVHGSGSQLFDHVAECLGDFMEKRKIKDKKSPVGFTFSFPCQQSKIDEAVLITWTKRFKASGVEGADVVKLLNKAIKKRGDYDANIVAVVNDTVGTMMTCGYDDQHCEVGLIIGTGTNACYMEELRHIDLVEGDEGRMCINTEWGAFGDDGSLEDIRTEFDREIDRGSLNPGKQLFEKMVSGMYLGELVRLILVKMAKEGLLFEGRITPELLTRGKFNTSDVSAIEKNKEGLHNAKEILTRLGVEPSDDDCVSVQHVCTIVSFRSANLVAATLGAILNRLRDNKGTPRLRTTVGVDGSLYKTHPQYSRRFHKTLRRLVPDSDVRFLLSESGSGKGAAMVTAVAYRLAEQHRQIEETLAHFHLTKDMLLEVKKRMRAEMELGLRKQTHNNAAVKMLPSFVRRTPDGTENGDFLALDLGGTNFRVLLVKIRSGKKRTVEMHNKIYAIPIEIMQGTGEELFDHIVSCISDFLDYMGIKGPRMPLGFTFSFPCKQTSLDAGILITWTKGFKATDCVGNDVATLLRDAIKRREEFDLDVVAVVNDTVGTMMTCAYEEPTCEVGLIVGTGSNACYMEEMKNVEMVEGDQGQMCINMEWGAFGDNGCLDDIRTHYDRLVDEYSLNAGKQRYEKMISGMYLGEIVRNILIDFTKKGFLFRGQISEPLKTRGIFETKFLSQIESDRLALLQVRAILQQLGLNSTCDDSILVKTVCGVVSRRAAQLCGAGMAAVVDKIRENRGLDRLNVTVGVDGTLYKLHPHFSRIMHQTVKELSPKCNVSFLLSEDGSGKGAALITAVGVRLRTEASS.

Residue M1 is modified to N-acetylmethionine. Positions 1-10 (MIAAQLLAYY) are mitochondrial-binding peptide (MBP). Hexokinase domains follow at residues 16–458 (DDQV…MVTA) and 464–906 (AEQH…LITA). ATP-binding positions include R30 and 84 to 89 (DLGGSS). The segment at 73 to 207 (DGSEKGDFIA…DYDANIVAVV (135 aa)) is hexokinase small subdomain 1. 84–91 (DLGGSSFR) contacts D-glucose 6-phosphate. Residues S155, 172-173 (TK), and 208-209 (ND) each bind D-glucose. The hexokinase large subdomain 1 stretch occupies residues 208–447 (NDTVGTMMTC…SDVRFLLSES (240 aa)). The D-glucose 6-phosphate site is built by D209 and T232. Residues N235, E260, and 291–294 (QLFE) each bind D-glucose. At S337 the chain carries Phosphoserine. N345 provides a ligand contact to ATP. 413-415 (DGS) provides a ligand contact to D-glucose 6-phosphate. 425-426 (RR) provides a ligand contact to ATP. D-glucose 6-phosphate contacts are provided by residues S449 and 532–536 (DLGGT). A hexokinase small subdomain 2 region spans residues 521–655 (DGTENGDFLA…EFDLDVVAVV (135 aa)). ATP is bound at residue 532–537 (DLGGTN). D-glucose-binding positions include 603–604 (SF), 620–621 (TK), and 656–657 (ND). Positions 656 to 895 (NDTVGTMMTC…CNVSFLLSED (240 aa)) are hexokinase large subdomain 2. D657 and T680 together coordinate D-glucose 6-phosphate. T680 is an ATP binding site. D-glucose is bound by residues 682 to 683 (SN), E708, and E742. ATP-binding positions include 747–748 (GM), 784–788 (TKFLS), and 863–867 (TLYKL). Residues 861-863 (DGT) and S897 contribute to the D-glucose 6-phosphate site.

It belongs to the hexokinase family. Monomer. Interacts with RABL2/RABL2A; binds preferentially to GTP-bound RABL2. Interacts with VDAC1. The HK1-VDAC1 complex interacts with ATF2. Interacts (via N-terminal spermatogenic cell-specific region) with PFKM (via C-terminus). Interacts with SMAD5.

Its subcellular location is the mitochondrion outer membrane. The protein localises to the cytoplasm. It is found in the cytosol. The catalysed reaction is a D-hexose + ATP = a D-hexose 6-phosphate + ADP + H(+). It catalyses the reaction D-fructose + ATP = D-fructose 6-phosphate + ADP + H(+). The enzyme catalyses D-glucose + ATP = D-glucose 6-phosphate + ADP + H(+). It carries out the reaction D-mannose + ATP = D-mannose 6-phosphate + ADP + H(+). The catalysed reaction is D-glucosamine + ATP = D-glucosamine 6-phosphate + ADP + H(+). Its pathway is carbohydrate metabolism; hexose metabolism. It functions in the pathway carbohydrate degradation; glycolysis; D-glyceraldehyde 3-phosphate and glycerone phosphate from D-glucose: step 1/4. With respect to regulation, hexokinase is an allosteric enzyme inhibited by its product D-glucose 6-phosphate. Hexokinase activity is inhibited by N-acetyl-D-glucosamine. Its function is as follows. Catalyzes the phosphorylation of various hexoses, such as D-glucose, D-glucosamine, D-fructose, D-mannose and 2-deoxy-D-glucose, to hexose 6-phosphate (D-glucose 6-phosphate, D-glucosamine 6-phosphate, D-fructose 6-phosphate, D-mannose 6-phosphate and 2-deoxy-D-glucose 6-phosphate, respectively). Does not phosphorylate N-acetyl-D-glucosamine. Mediates the initial step of glycolysis by catalyzing phosphorylation of D-glucose to D-glucose 6-phosphate. Involved in innate immunity and inflammation by acting as a pattern recognition receptor for bacterial peptidoglycan. When released in the cytosol, N-acetyl-D-glucosamine component of bacterial peptidoglycan inhibits the hexokinase activity of HK1 and causes its dissociation from mitochondrial outer membrane, thereby activating the NLRP3 inflammasome. The sequence is that of Hexokinase-1 from Pongo abelii (Sumatran orangutan).